The chain runs to 259 residues: 4-hydroxy-tetrahydrodipicolinate reductase (259 aa).

Residues 9–14 (GAGGRM) and glutamate 35 contribute to the NAD(+) site. Arginine 36 lines the NADP(+) pocket. NAD(+) is bound by residues 92–94 (GTT) and 116–119 (APNM). The active-site Proton donor/acceptor is histidine 149. Residue histidine 150 participates in (S)-2,3,4,5-tetrahydrodipicolinate binding. The active-site Proton donor is the lysine 153. Residue 159–160 (GT) coordinates (S)-2,3,4,5-tetrahydrodipicolinate.

Belongs to the DapB family.

Its subcellular location is the cytoplasm. The enzyme catalyses (S)-2,3,4,5-tetrahydrodipicolinate + NAD(+) + H2O = (2S,4S)-4-hydroxy-2,3,4,5-tetrahydrodipicolinate + NADH + H(+). It carries out the reaction (S)-2,3,4,5-tetrahydrodipicolinate + NADP(+) + H2O = (2S,4S)-4-hydroxy-2,3,4,5-tetrahydrodipicolinate + NADPH + H(+). It functions in the pathway amino-acid biosynthesis; L-lysine biosynthesis via DAP pathway; (S)-tetrahydrodipicolinate from L-aspartate: step 4/4. Catalyzes the conversion of 4-hydroxy-tetrahydrodipicolinate (HTPA) to tetrahydrodipicolinate. The sequence is that of 4-hydroxy-tetrahydrodipicolinate reductase from Oleidesulfovibrio alaskensis (strain ATCC BAA-1058 / DSM 17464 / G20) (Desulfovibrio alaskensis).